The sequence spans 443 residues: Putative transporter AmpG 1 (443 aa).

The next 12 helical transmembrane spans lie at 6–26 (HVCI…MITG), 43–63 (IGIL…APVF), 74–96 (ILGH…TSIL), 106–128 (VLLS…ILSA), 144–164 (GIYI…AIYL), 172–192 (KIYQ…ILVS), 255–275 (DISL…YRLP), 300–320 (VCKF…GIIM), 326–346 (LYSI…FILL), 355–375 (ILFI…TAYI), 394–414 (LSSM…YMVV), and 416–436 (FGWQ…LLIL).

The protein belongs to the major facilitator superfamily.

It localises to the cell inner membrane. In Rickettsia typhi (strain ATCC VR-144 / Wilmington), this protein is Putative transporter AmpG 1 (ampG1).